Here is a 465-residue protein sequence, read N- to C-terminus: Hydroxyacid-oxoacid transhydrogenase, mitochondrial (465 aa).

This sequence belongs to the iron-containing alcohol dehydrogenase family. Hydroxyacid-oxoacid transhydrogenase subfamily.

The protein resides in the mitochondrion. The enzyme catalyses (S)-3-hydroxybutanoate + 2-oxoglutarate = (R)-2-hydroxyglutarate + acetoacetate. The catalysed reaction is 4-hydroxybutanoate + 2-oxoglutarate = (R)-2-hydroxyglutarate + succinate semialdehyde. Its function is as follows. Catalyzes the cofactor-independent reversible oxidation of gamma-hydroxybutyrate (GHB) to succinic semialdehyde (SSA) coupled to reduction of 2-ketoglutarate (2-KG) to D-2-hydroxyglutarate (D-2-HG). L-3-hydroxybutyrate (L-3-OHB) is also a substrate for HOT when using 2-KG as hydrogen acceptor, resulting in the formation of D-2-HG. This chain is Hydroxyacid-oxoacid transhydrogenase, mitochondrial, found in Caenorhabditis briggsae.